Here is an 83-residue protein sequence, read N- to C-terminus: Protein YqgD (83 aa).

It belongs to the YqgD family.

This is Protein YqgD (yqgD) from Escherichia coli (strain K12).